Here is a 498-residue protein sequence, read N- to C-terminus: ATP synthase subunit beta, chloroplastic (498 aa).

172–179 provides a ligand contact to ATP; it reads GGAGVGKT.

The protein belongs to the ATPase alpha/beta chains family. F-type ATPases have 2 components, CF(1) - the catalytic core - and CF(0) - the membrane proton channel. CF(1) has five subunits: alpha(3), beta(3), gamma(1), delta(1), epsilon(1). CF(0) has four main subunits: a(1), b(1), b'(1) and c(9-12).

Its subcellular location is the plastid. It is found in the chloroplast thylakoid membrane. The catalysed reaction is ATP + H2O + 4 H(+)(in) = ADP + phosphate + 5 H(+)(out). Produces ATP from ADP in the presence of a proton gradient across the membrane. The catalytic sites are hosted primarily by the beta subunits. The chain is ATP synthase subunit beta, chloroplastic from Saccharum hybrid (Sugarcane).